The chain runs to 974 residues: Ephrin type-B receptor 3 (974 aa).

An N-terminal signal peptide occupies residues 1–16; that stretch reads MLPAVFVILALSAVQG. Over 17–534 the chain is Extracellular; it reads LEETLMDTKW…RSSLQEQVPM (518 aa). In terms of domain architecture, Eph LBD spans 18 to 196; sequence EETLMDTKWT…FFKKCPRTTA (179 aa). Cys60 and Cys178 are disulfide-bonded. Fibronectin type-III domains follow at residues 318 to 426 and 427 to 522; these read VPSA…TNQA and APSS…IAED. N-linked (GlcNAc...) asparagine glycosylation is found at Asn330 and Asn420. A helical transmembrane segment spans residues 535–555; sequence VVGSVTAGLIFIIAVVIIVIV. The Cytoplasmic segment spans residues 556–974; sequence CFSRKQRNDS…QMSQTLPVQV (419 aa). At Tyr590 the chain carries Phosphotyrosine; by autocatalysis. The Protein kinase domain occupies 609 to 872; that stretch reads VKIEEVIGAG…QIVSSLDKLI (264 aa). ATP-binding positions include 615 to 623 and Lys641; that span reads IGAGEFGEV. The active-site Proton acceptor is the Asp734. Positions 901 to 965 constitute an SAM domain; sequence TTFPTVSDWL…LNSVQDMRLQ (65 aa). Positions 972-974 match the PDZ-binding motif; it reads VQV.

This sequence belongs to the protein kinase superfamily. Tyr protein kinase family. Ephrin receptor subfamily. In terms of assembly, heterotetramer upon binding of the ligand. The heterotetramer is composed of an ephrin dimer and a receptor dimer. Oligomerization is probably required to induce biological responses. In terms of processing, phosphorylated. Autophosphorylates upon ligand-binding. Autophosphorylation on Tyr-590 is required for interaction with SH2 domain-containing proteins. In terms of tissue distribution, expressed in the embryo in pre-somitic mesoderm, caudal somites, midbrain, and cement gland. Most abundant in adult brain, eye, heart, lung and ovary. Lower levels in intestine, kidney, oviduct and pharynx.

Its subcellular location is the cell membrane. The protein resides in the cell projection. It localises to the dendrite. It catalyses the reaction L-tyrosyl-[protein] + ATP = O-phospho-L-tyrosyl-[protein] + ADP + H(+). Receptor tyrosine kinase which binds promiscuously transmembrane ephrin-B family ligands residing on adjacent cells, leading to contact-dependent bidirectional signaling into neighboring cells. The signaling pathway downstream of the receptor is referred to as forward signaling while the signaling pathway downstream of the ephrin ligand is referred to as reverse signaling. Generally has an overlapping and redundant function with EPHB2. Like EPHB2, functions in axon guidance during development. In addition to its role in axon guidance also plays an important redundant role with other ephrin-B receptors in development and maturation of dendritic spines and the formation of excitatory synapses. May control other aspects of development through regulation of cell migration and positioning. This is Ephrin type-B receptor 3 (ephb3) from Xenopus laevis (African clawed frog).